A 549-amino-acid chain; its full sequence is DNA ligase 1 (549 aa).

Glutamate 212 provides a ligand contact to ATP. Lysine 214 serves as the catalytic N6-AMP-lysine intermediate. The ATP site is built by arginine 219, arginine 234, glutamate 264, phenylalanine 310, arginine 387, and lysine 393.

The protein belongs to the ATP-dependent DNA ligase family. It depends on Mg(2+) as a cofactor.

It catalyses the reaction ATP + (deoxyribonucleotide)n-3'-hydroxyl + 5'-phospho-(deoxyribonucleotide)m = (deoxyribonucleotide)n+m + AMP + diphosphate.. Functionally, DNA ligase that seals nicks in double-stranded DNA during DNA replication, DNA recombination and DNA repair. In Methanosarcina barkeri (strain Fusaro / DSM 804), this protein is DNA ligase 1.